The sequence spans 400 residues: Serpin E3 (400 aa).

The N-terminal stretch at 1–19 (MQSLLLALLLLPVCSPGGA) is a signal peptide. Residue N46 is glycosylated (N-linked (GlcNAc...) asparagine).

Belongs to the serpin family.

It is found in the secreted. Functionally, probable serine protease inhibitor. The protein is Serpin E3 (SERPINE3) of Bos taurus (Bovine).